A 375-amino-acid chain; its full sequence is MENFPTEYFLNTSVRLLEYIRYRDSNYTREERIENLHYAYNKAAHHFAQPRQQQLLKVDPKRLQASLQTIVGMVVYSWAKVSKECMADLSIHYTYTLVLDDSSDDPYPAMLNYFGDLQAGREQAHPWWALVNEHFPNVLRHFGPFCSLNLIRSTMDFFEGCWIEQYNFGGFPGSDDYPQFLRRMNGLGHCVGASLWPKDLFDERKHFLEITSAVAQMENWMVWVNDLMSFYKEFDDERDQISLVKNFVTCHEITLDEALEKLTQETLHSSKQMVAVFSNKDPQVMDTIECFMHGYVTWHLCDARYRLHEIYEKVKDQDTEDAKKFCKFFEQAANVGAVAPSEWAYPPVAQLANVRAKGDVKEAQKPFLSSIELVE.

The protein belongs to the trichodiene synthase family.

It carries out the reaction (2E,6E)-farnesyl diphosphate = trichodiene + diphosphate. The protein operates within sesquiterpene biosynthesis; trichothecene biosynthesis. TS is a member of the terpene cyclase group of enzymes. It catalyzes the isomerization and cyclization of farnesyl pyro-phosphate to form trichodiene, the first cyclic intermediate in the biosynthetic pathway for trichothecenes. It serves to branch trichothecene biosynthesis from the isoprenoid pathway. The polypeptide is Trichodiene synthase (TRI5) (Fusarium pseudograminearum (Wheat and barley crown-rot fungus)).